The following is a 149-amino-acid chain: Ribosome-binding factor A (149 aa).

The segment at 123-149 (LAKLREGAAPAGDADPYKTSSKSESEE) is disordered.

Belongs to the RbfA family. As to quaternary structure, monomer. Binds 30S ribosomal subunits, but not 50S ribosomal subunits or 70S ribosomes.

The protein localises to the cytoplasm. Functionally, one of several proteins that assist in the late maturation steps of the functional core of the 30S ribosomal subunit. Associates with free 30S ribosomal subunits (but not with 30S subunits that are part of 70S ribosomes or polysomes). Required for efficient processing of 16S rRNA. May interact with the 5'-terminal helix region of 16S rRNA. The polypeptide is Ribosome-binding factor A (Corynebacterium glutamicum (strain ATCC 13032 / DSM 20300 / JCM 1318 / BCRC 11384 / CCUG 27702 / LMG 3730 / NBRC 12168 / NCIMB 10025 / NRRL B-2784 / 534)).